The following is a 74-amino-acid chain: MYIDATQYRNDDEFTQYAKGKVAQLRLMLNSKKSALQKDKELQQQAKAQESALAGEELRRRALSLATQNRMVTL.

Residues 29 to 63 (LNSKKSALQKDKELQQQAKAQESALAGEELRRRAL) adopt a coiled-coil conformation.

This is an uncharacterized protein from Pseudoalteromonas phage PM2 (Bacteriophage PM2).